Here is a 360-residue protein sequence, read N- to C-terminus: Phosphoserine aminotransferase (360 aa).

Arginine 41 contributes to the L-glutamate binding site. Residues tryptophan 101, threonine 152, aspartate 172, and glutamine 195 each contribute to the pyridoxal 5'-phosphate site. Position 196 is an N6-(pyridoxal phosphate)lysine (lysine 196). 237 to 238 provides a ligand contact to pyridoxal 5'-phosphate; the sequence is NT.

Belongs to the class-V pyridoxal-phosphate-dependent aminotransferase family. SerC subfamily. As to quaternary structure, homodimer. The cofactor is pyridoxal 5'-phosphate.

It localises to the cytoplasm. It carries out the reaction O-phospho-L-serine + 2-oxoglutarate = 3-phosphooxypyruvate + L-glutamate. The catalysed reaction is 4-(phosphooxy)-L-threonine + 2-oxoglutarate = (R)-3-hydroxy-2-oxo-4-phosphooxybutanoate + L-glutamate. It participates in amino-acid biosynthesis; L-serine biosynthesis; L-serine from 3-phospho-D-glycerate: step 2/3. Its pathway is cofactor biosynthesis; pyridoxine 5'-phosphate biosynthesis; pyridoxine 5'-phosphate from D-erythrose 4-phosphate: step 3/5. Its function is as follows. Catalyzes the reversible conversion of 3-phosphohydroxypyruvate to phosphoserine and of 3-hydroxy-2-oxo-4-phosphonooxybutanoate to phosphohydroxythreonine. This is Phosphoserine aminotransferase from Burkholderia cenocepacia (strain ATCC BAA-245 / DSM 16553 / LMG 16656 / NCTC 13227 / J2315 / CF5610) (Burkholderia cepacia (strain J2315)).